A 329-amino-acid chain; its full sequence is Acetoacetyl CoA synthase NphT7 (329 aa).

Residues Cys115, His256, and Asn286 contribute to the active site.

The protein belongs to the thiolase-like superfamily. FabH family. As to quaternary structure, homodimer.

It is found in the cytoplasm. It carries out the reaction malonyl-CoA + acetyl-CoA + H(+) = acetoacetyl-CoA + CO2 + CoA. The protein operates within metabolic intermediate biosynthesis; (R)-mevalonate biosynthesis. In terms of biological role, catalyzes the condensation of acetyl-CoA and malonyl-CoA to form acetoacetyl-CoA and CoA. Does not accept malonyl-[acyl-carrier-protein] as a substrate. Can also convert malonyl-CoA into acetyl-CoA via decarboxylation of malonyl-CoA. The sequence is that of Acetoacetyl CoA synthase NphT7 (nphT7) from Streptomyces sp. (strain CL190).